We begin with the raw amino-acid sequence, 156 residues long: Small ribosomal subunit protein uS7 (156 aa).

This sequence belongs to the universal ribosomal protein uS7 family. In terms of assembly, part of the 30S ribosomal subunit. Contacts proteins S9 and S11.

Functionally, one of the primary rRNA binding proteins, it binds directly to 16S rRNA where it nucleates assembly of the head domain of the 30S subunit. Is located at the subunit interface close to the decoding center, probably blocks exit of the E-site tRNA. The chain is Small ribosomal subunit protein uS7 from Clostridium botulinum (strain 657 / Type Ba4).